The sequence spans 457 residues: Hepatocyte nuclear factor 3-beta (457 aa).

Positions 14-93 are transactivation domain 1; it reads DWSSYYAEPE…AGAMAGMGGS (80 aa). The Nuclear localization signal signature appears at 106 to 113; it reads LSPSLSPL. Threonine 156 is modified (phosphothreonine). Positions 159 to 252 form a DNA-binding region, fork-head; the sequence is KPPYSYISLI…FENGCYLRRQ (94 aa). Phosphoserine is present on residues serine 212 and serine 283. The segment covering 280–292 has biased composition (low complexity); the sequence is AQASQAQLGEAAG. The segment at 280–365 is disordered; that stretch reads AQASQAQLGE…PGLPPEAHLK (86 aa). The segment covering 298–310 has biased composition (polar residues); the sequence is PAGTESPHSSASP. Residue threonine 301 is modified to Phosphothreonine. 4 positions are modified to phosphoserine: serine 303, serine 306, serine 307, and serine 309. Residues 339–352 show a composition bias toward low complexity; it reads PGQQQQAAAHLLGP. The transactivation domain 2 stretch occupies residues 361–457; it reads EAHLKPEHHY…VYSRPIMNSS (97 aa). Phosphoserine is present on residues serine 436 and serine 457.

Binds DNA as a monomer. Binds TLE1. Interacts with FOXA1 and FOXA3. Interacts with PRKDC. Interacts with AKT1. Interacts with TET1; this interaction may recruit TET1 to specific genomic loci to mediate their demethylation. In terms of processing, phosphorylation on Thr-156 abolishes binding to target promoters and subsequent transcription activation upon insulin stimulation.

Its subcellular location is the nucleus. It is found in the cytoplasm. Its function is as follows. Transcription factor that is involved in embryonic development, establishment of tissue-specific gene expression and regulation of gene expression in differentiated tissues. Is thought to act as a 'pioneer' factor opening the compacted chromatin for other proteins through interactions with nucleosomal core histones and thereby replacing linker histones at target enhancer and/or promoter sites. Binds DNA with the consensus sequence 5'-[AC]A[AT]T[AG]TT[GT][AG][CT]T[CT]-3'. In embryonic development is required for notochord formation. Involved in the development of multiple endoderm-derived organ systems such as the liver, pancreas and lungs; FOXA1 and FOXA2 seem to have at least in part redundant roles. Originally described as a transcription activator for a number of liver genes such as AFP, albumin, tyrosine aminotransferase, PEPCK, etc. Interacts with the cis-acting regulatory regions of these genes. Involved in glucose homeostasis; regulates the expression of genes important for glucose sensing in pancreatic beta-cells and glucose homeostasis. Involved in regulation of fat metabolism. Binds to fibrinogen beta promoter and is involved in IL6-induced fibrinogen beta transcriptional activation. This Homo sapiens (Human) protein is Hepatocyte nuclear factor 3-beta (FOXA2).